We begin with the raw amino-acid sequence, 1086 residues long: WD repeat-containing protein 64 (1086 aa).

WD repeat units lie at residues 129-168 (RRRD…WITG), 170-199 (DYLG…SSQE), 321-360 (AMPR…KPVG), 364-403 (GHMF…VLQV), 411-448 (PGDM…QDTK), 453-492 (THER…QIYQ), 498-537 (GLSI…EMKM), 560-602 (QVKQ…PYLQ), and 642-683 (IVDV…VKEI). A disordered region spans residues 724–749 (ICSSTQCDSSKGPQSSKGSKQSIHDA). The segment covering 732–744 (SSKGPQSSKGSKQ) has biased composition (low complexity). WD repeat units follow at residues 765–806 (ASRK…KDML), 809–850 (TKHS…DPPH), and 863–902 (AHSL…YCGY). The disordered stretch occupies residues 1047-1069 (DKVKREEAPEMTEGSRRKSLKRN). A compositionally biased stretch (basic and acidic residues) spans 1049–1062 (VKREEAPEMTEGSR).

This chain is WD repeat-containing protein 64 (Wdr64), found in Mus musculus (Mouse).